A 440-amino-acid chain; its full sequence is C4-dicarboxylate transport protein (440 aa).

Transmembrane regions (helical) follow at residues 8 to 28, 40 to 60, 74 to 94, 147 to 167, 187 to 207, 221 to 241, 288 to 308, and 354 to 374; these read LYLQ…LFPA, FIKL…VTGI, LKGL…GLVV, GDIL…AALK, IVGF…AFTV, LIAC…GLVL, VVGL…SIYL, and AATL…LLGV. The interval 419 to 440 is disordered; it reads DEVEPANDPEPPAMAAGLGLHG.

Belongs to the dicarboxylate/amino acid:cation symporter (DAACS) (TC 2.A.23) family.

The protein localises to the cell inner membrane. Its function is as follows. Responsible for the transport of dicarboxylates such as succinate, fumarate, and malate from the periplasm across the membrane. This Anaeromyxobacter dehalogenans (strain 2CP-C) protein is C4-dicarboxylate transport protein.